Reading from the N-terminus, the 179-residue chain is Large ribosomal subunit protein uL5 (179 aa).

Belongs to the universal ribosomal protein uL5 family. In terms of assembly, part of the 50S ribosomal subunit; part of the 5S rRNA/L5/L18/L25 subcomplex. Contacts the 5S rRNA and the P site tRNA. Forms a bridge to the 30S subunit in the 70S ribosome.

In terms of biological role, this is one of the proteins that bind and probably mediate the attachment of the 5S RNA into the large ribosomal subunit, where it forms part of the central protuberance. In the 70S ribosome it contacts protein S13 of the 30S subunit (bridge B1b), connecting the 2 subunits; this bridge is implicated in subunit movement. Contacts the P site tRNA; the 5S rRNA and some of its associated proteins might help stabilize positioning of ribosome-bound tRNAs. The protein is Large ribosomal subunit protein uL5 of Burkholderia mallei (strain ATCC 23344).